The sequence spans 279 residues: Acetyl-coenzyme A carboxylase carboxyl transferase subunit beta (279 aa).

Positions 23 to 279 constitute a CoA carboxyltransferase N-terminal domain; sequence LWWKCEECGA…LVTLFSMLKV (257 aa). Zn(2+) is bound by residues C27, C30, C46, and C49. A C4-type zinc finger spans residues 27 to 49; the sequence is CEECGAMLHKKQFEDHFFTCAEC.

The protein belongs to the AccD/PCCB family. As to quaternary structure, acetyl-CoA carboxylase is a heterohexamer composed of biotin carboxyl carrier protein (AccB), biotin carboxylase (AccC) and two subunits each of ACCase subunit alpha (AccA) and ACCase subunit beta (AccD). Zn(2+) serves as cofactor.

The protein localises to the cytoplasm. It catalyses the reaction N(6)-carboxybiotinyl-L-lysyl-[protein] + acetyl-CoA = N(6)-biotinyl-L-lysyl-[protein] + malonyl-CoA. The protein operates within lipid metabolism; malonyl-CoA biosynthesis; malonyl-CoA from acetyl-CoA: step 1/1. In terms of biological role, component of the acetyl coenzyme A carboxylase (ACC) complex. Biotin carboxylase (BC) catalyzes the carboxylation of biotin on its carrier protein (BCCP) and then the CO(2) group is transferred by the transcarboxylase to acetyl-CoA to form malonyl-CoA. The polypeptide is Acetyl-coenzyme A carboxylase carboxyl transferase subunit beta (Pelodictyon phaeoclathratiforme (strain DSM 5477 / BU-1)).